Here is an 89-residue protein sequence, read N- to C-terminus: Small ribosomal subunit protein uS15 (89 aa).

Belongs to the universal ribosomal protein uS15 family. In terms of assembly, part of the 30S ribosomal subunit. Forms a bridge to the 50S subunit in the 70S ribosome, contacting the 23S rRNA.

In terms of biological role, one of the primary rRNA binding proteins, it binds directly to 16S rRNA where it helps nucleate assembly of the platform of the 30S subunit by binding and bridging several RNA helices of the 16S rRNA. Its function is as follows. Forms an intersubunit bridge (bridge B4) with the 23S rRNA of the 50S subunit in the ribosome. This chain is Small ribosomal subunit protein uS15, found in Cellvibrio japonicus (strain Ueda107) (Pseudomonas fluorescens subsp. cellulosa).